The following is a 132-amino-acid chain: UPF0292 protein PH1700 (132 aa).

The region spanning 20-100 (EGAIIVEGAR…KVDTETRREL (81 aa)) is the Toprim domain. Residues E26, D69, and D71 each coordinate Mg(2+).

It belongs to the UPF0292 family. Mg(2+) is required as a cofactor.

This is UPF0292 protein PH1700 from Pyrococcus horikoshii (strain ATCC 700860 / DSM 12428 / JCM 9974 / NBRC 100139 / OT-3).